The primary structure comprises 218 residues: N-(5'-phosphoribosyl)anthranilate isomerase (218 aa).

This sequence belongs to the TrpF family.

It catalyses the reaction N-(5-phospho-beta-D-ribosyl)anthranilate = 1-(2-carboxyphenylamino)-1-deoxy-D-ribulose 5-phosphate. Its pathway is amino-acid biosynthesis; L-tryptophan biosynthesis; L-tryptophan from chorismate: step 3/5. The protein is N-(5'-phosphoribosyl)anthranilate isomerase of Stenotrophomonas maltophilia (strain R551-3).